Reading from the N-terminus, the 185-residue chain is Protein GrpE (185 aa).

Belongs to the GrpE family. As to quaternary structure, homodimer.

The protein localises to the cytoplasm. In terms of biological role, participates actively in the response to hyperosmotic and heat shock by preventing the aggregation of stress-denatured proteins, in association with DnaK and GrpE. It is the nucleotide exchange factor for DnaK and may function as a thermosensor. Unfolded proteins bind initially to DnaJ; upon interaction with the DnaJ-bound protein, DnaK hydrolyzes its bound ATP, resulting in the formation of a stable complex. GrpE releases ADP from DnaK; ATP binding to DnaK triggers the release of the substrate protein, thus completing the reaction cycle. Several rounds of ATP-dependent interactions between DnaJ, DnaK and GrpE are required for fully efficient folding. This Methanobrevibacter smithii (strain ATCC 35061 / DSM 861 / OCM 144 / PS) protein is Protein GrpE.